A 278-amino-acid polypeptide reads, in one-letter code: E3 ubiquitin-protein ligase CHIP (278 aa).

TPR repeat units follow at residues 10-43 (AERL…SPNV), 45-77 (AYWT…VHNS), and 78-111 (VKAH…GRCS). A coiled-coil region spans residues 143-194 (ELNSLKETCEAALNQQRALDMSRTEESSDEAYTAHTERLKALERVFKKAAEE). Positions 199–273 (EVPDYLCCNI…AAYLEKHVWA (75 aa)) constitute a U-box domain.

As to quaternary structure, interacts with HSC70-4, PP2AA1, PP2AA3 and PP2A5, as well as with UBC8, UBC9 and UBC10. Also interacts with the chloroplastic proteolytic subunits ClpP4, FtsH1 and FtsH2.

The enzyme catalyses S-ubiquitinyl-[E2 ubiquitin-conjugating enzyme]-L-cysteine + [acceptor protein]-L-lysine = [E2 ubiquitin-conjugating enzyme]-L-cysteine + N(6)-ubiquitinyl-[acceptor protein]-L-lysine.. It functions in the pathway protein modification; protein ubiquitination. Has E3 ubiquitin-protein ligase activity and may target misfolded substrates towards proteasomal degradation. Regulates the activity of some serine/threonine-protein phosphatases by E3 ubiquitin-protein ligase activity. Required for responses to biotic and abiotic stresses such as auxin, abscisic acid (ABA), low and high temperature and darkness, probably through the activation of serine/threonine-protein phosphatase and the subsequent modification of the plasma membrane composition. Regulates the chloroplastic Clp proteolytic activity in response to stresses. Ubiquitylates FtsH1, a component of the chloroplast FtsH protease, and affects protein degradation in chloroplasts. Mediates plastid precursor degradation to prevent cytosolic precursor accumulation, together with the molecular chaperone HSC70-4. Mediates ubiquitination of transit peptides and thereby led to their degradation through the ubiquitin-proteasome system. The sequence is that of E3 ubiquitin-protein ligase CHIP from Arabidopsis thaliana (Mouse-ear cress).